Consider the following 88-residue polypeptide: UPF0250 protein Ssed_3490 (88 aa).

It belongs to the UPF0250 family.

In Shewanella sediminis (strain HAW-EB3), this protein is UPF0250 protein Ssed_3490.